Here is a 226-residue protein sequence, read N- to C-terminus: Protein-L-isoaspartate(D-aspartate) O-methyltransferase (226 aa).

Residues 57-60 (VTIS), histidine 65, serine 89, 115-116 (EH), 147-148 (DG), and threonine 222 contribute to the S-adenosyl-L-homocysteine site. The active site involves serine 60.

This sequence belongs to the methyltransferase superfamily. L-isoaspartyl/D-aspartyl protein methyltransferase family. Monomer.

It localises to the cytoplasm. Its subcellular location is the cytosol. The catalysed reaction is [protein]-L-isoaspartate + S-adenosyl-L-methionine = [protein]-L-isoaspartate alpha-methyl ester + S-adenosyl-L-homocysteine. In terms of biological role, initiates the repair of damaged proteins by catalyzing methyl esterification of L-isoaspartyl and D-aspartyl residues produced by spontaneous isomerization and racemization of L-aspartyl and L-asparaginyl residues in aging peptides and proteins. The chain is Protein-L-isoaspartate(D-aspartate) O-methyltransferase (Pcmt) from Drosophila melanogaster (Fruit fly).